Consider the following 94-residue polypeptide: Putative FXYD domain-containing ion transport regulator 8 (94 aa).

The first 18 residues, 1–18 (MEVVLIFVYSLLVPVVLA), serve as a signal peptide directing secretion. Residues 19–34 (SAAKEKEIDPFHYNYQ) are Extracellular-facing. Residues 35–58 (TLRIGGLVFDVVLFLVPSCHLLSH) form a helical membrane-spanning segment. Residues 59–94 (RCKCSFNQKPQDPGDKEAQVENFITANAKEPQKAKN) lie on the Cytoplasmic side of the membrane. The disordered stretch occupies residues 66 to 94 (QKPQDPGDKEAQVENFITANAKEPQKAKN).

The protein belongs to the FXYD family.

It localises to the membrane. The protein is Putative FXYD domain-containing ion transport regulator 8 (FXYD6P3) of Homo sapiens (Human).